A 268-amino-acid chain; its full sequence is Interleukin-1 beta (268 aa).

Positions 1 to 116 (MATVPELTSE…TWDDYSLECD (116 aa)) are excised as a propeptide.

The protein belongs to the IL-1 family. In terms of assembly, monomer. In its precursor form, weakly interacts with full-length MEFV; the mature cytokine does not interact at all. Interacts with integrins ITGAV:ITGBV and ITGA5:ITGB1; integrin-binding is required for IL1B signaling. Interacts with cargo receptor TMED10; the interaction is direct and is required for the secretion of IL1B mature form. Interacts with HSP90AB1; the interaction facilitates cargo translocation into the ERGIC. Interacts with HSP90B1; the interaction facilitates cargo translocation into the ERGIC.

It is found in the cytoplasm. It localises to the cytosol. Its subcellular location is the secreted. The protein localises to the lysosome. The protein resides in the extracellular exosome. In terms of biological role, potent pro-inflammatory cytokine. Initially discovered as the major endogenous pyrogen, induces prostaglandin synthesis, neutrophil influx and activation, T-cell activation and cytokine production, B-cell activation and antibody production, and fibroblast proliferation and collagen production. Promotes Th17 differentiation of T-cells. Synergizes with IL12/interleukin-12 to induce IFNG synthesis from T-helper 1 (Th1) cells. Plays a role in angiogenesis by inducing VEGF production synergistically with TNF and IL6. Involved in transduction of inflammation downstream of pyroptosis: its mature form is specifically released in the extracellular milieu by passing through the gasdermin-D (GSDMD) pore. The sequence is that of Interleukin-1 beta (IL1B) from Oryctolagus cuniculus (Rabbit).